The following is a 344-amino-acid chain: tRNA (guanine(26)-N(2))-dimethyltransferase (344 aa).

A Trm1 methyltransferase domain is found at 1-334; it reads MIVREGSAEI…ASCDLVESLM (334 aa). The S-adenosyl-L-methionine site is built by Arg35, Arg60, and Glu76.

The protein belongs to the class I-like SAM-binding methyltransferase superfamily. Trm1 family.

It catalyses the reaction guanosine(26) in tRNA + 2 S-adenosyl-L-methionine = N(2)-dimethylguanosine(26) in tRNA + 2 S-adenosyl-L-homocysteine + 2 H(+). Dimethylates a single guanine residue at position 26 of a number of tRNAs using S-adenosyl-L-methionine as donor of the methyl groups. The chain is tRNA (guanine(26)-N(2))-dimethyltransferase from Thermoplasma acidophilum (strain ATCC 25905 / DSM 1728 / JCM 9062 / NBRC 15155 / AMRC-C165).